The following is a 233-amino-acid chain: Pirin-like protein YhaK (233 aa).

The protein belongs to the pirin family. As to quaternary structure, monomer.

The protein resides in the cytoplasm. In terms of biological role, does not have quercetin 2,3-dioxygenase activity. The sequence is that of Pirin-like protein YhaK (yhaK) from Escherichia coli O157:H7.